Consider the following 130-residue polypeptide: Fluoride-specific ion channel FluC (130 aa).

The next 4 membrane-spanning stretches (helical) occupy residues 3-23, 38-58, 67-87, and 102-122; these read FVFLWAALGGAIGSSLRYFVG, LGTFSVNLIGCFVIGFMGHLA, FGIFFVTGVLGGFTTFSSYGL, and VSYVLGTNLLGLIGVAIGWFL. Na(+) contacts are provided by Gly-77 and Thr-80.

This sequence belongs to the fluoride channel Fluc/FEX (TC 1.A.43) family.

It is found in the cell inner membrane. The enzyme catalyses fluoride(in) = fluoride(out). With respect to regulation, na(+) is not transported, but it plays an essential structural role and its presence is essential for fluoride channel function. Its function is as follows. Fluoride-specific ion channel. Important for reducing fluoride concentration in the cell, thus reducing its toxicity. This Helicobacter pylori (strain HPAG1) protein is Fluoride-specific ion channel FluC.